We begin with the raw amino-acid sequence, 149 residues long: MERTFLMIKPDAVQRNLIGEIISRIERKGLKLVGGKFMTVPQSLAEEHYAEHTDKPFYKHLISFITSAPVFAMVVEGEDAVHVARHIIGKTNPSEATPGTIRGDLGLTVGRNIIHGSDSVESANKEINLWFKADELSEYSESRESWLYE.

ATP is bound by residues Lys-9, Phe-57, Arg-85, Thr-91, Arg-102, and Asn-112. His-115 acts as the Pros-phosphohistidine intermediate in catalysis.

Belongs to the NDK family. As to quaternary structure, homotetramer. Requires Mg(2+) as cofactor.

The protein localises to the cytoplasm. The enzyme catalyses a 2'-deoxyribonucleoside 5'-diphosphate + ATP = a 2'-deoxyribonucleoside 5'-triphosphate + ADP. The catalysed reaction is a ribonucleoside 5'-diphosphate + ATP = a ribonucleoside 5'-triphosphate + ADP. Its function is as follows. Major role in the synthesis of nucleoside triphosphates other than ATP. The ATP gamma phosphate is transferred to the NDP beta phosphate via a ping-pong mechanism, using a phosphorylated active-site intermediate. The polypeptide is Nucleoside diphosphate kinase (Staphylococcus saprophyticus subsp. saprophyticus (strain ATCC 15305 / DSM 20229 / NCIMB 8711 / NCTC 7292 / S-41)).